The sequence spans 316 residues: Long form salivary protein D7L1 (316 aa).

The signal sequence occupies residues 1 to 23; that stretch reads MSHTRAVVLAVACLCLILVQVEG. 4 disulfide bridges follow: Cys40–Cys76, Cys72–Cys131, Cys181–Cys214, and Cys255–Cys266.

It belongs to the PBP/GOBP family.

The protein resides in the secreted. Its function is as follows. Modulates blood feeding of female mosquitoes on vertebrate species by binding and sequestering different mediators involved in the host response, such as biogenic amines and eicosanoids. Binds serotonin, tryptamine, histamine, leukotriene C4, leukotriene D4 and leukotriene E4. Does not bind octopamine, dopamine, noradrenaline, adrenaline and prostaglandin PGF2alpha. The protein is Long form salivary protein D7L1 of Anopheles atroparvus (European mosquito).